Here is an 847-residue protein sequence, read N- to C-terminus: Ras GTPase-activating protein 2 (847 aa).

The span at 1–18 (MAAAAPAAAALTEAPAVP) shows a compositional bias: low complexity. The tract at residues 1-31 (MAAAAPAAAALTEAPAVPGTAEPETGDEDSR) is disordered. Ala2 carries the post-translational modification N-acetylalanine. C2 domains follow at residues 19-137 (GTAE…ETWF) and 148-288 (VQGK…QAWY). Positions 371–588 (NKLVPFITAV…TDVKKFLDEI (218 aa)) constitute a Ras-GAP domain. Position 554 is a phosphoserine (Ser554). The region spanning 603–704 (VHLKEGEMYK…WIDMLCRVSR (102 aa)) is the PH domain. The Btk-type zinc finger occupies 706–742 (NHNRLSSFHPSAYLNGNWLCCQETSEGTPGCKPCTAG). Residues His714, Cys725, Cys726, and Cys736 each contribute to the Zn(2+) site. Residues 819 to 847 (DEPHEKYRKKRSSSAKYGSKENPIVGKIS) form a disordered region.

Widely expressed. Higher expression in brain, placenta, and kidney.

Its subcellular location is the cell membrane. In terms of biological role, inhibitory regulator of the Ras-cyclic AMP pathway. May bind inositol tetrakisphosphate (IP4) and phospholipids. This Rattus norvegicus (Rat) protein is Ras GTPase-activating protein 2 (Rasa2).